A 424-amino-acid chain; its full sequence is Histidine--tRNA ligase (424 aa).

Belongs to the class-II aminoacyl-tRNA synthetase family. Homodimer.

It localises to the cytoplasm. It carries out the reaction tRNA(His) + L-histidine + ATP = L-histidyl-tRNA(His) + AMP + diphosphate + H(+). This Shigella dysenteriae serotype 1 (strain Sd197) protein is Histidine--tRNA ligase.